The following is a 54-amino-acid chain: Potassium channel toxin alpha-KTx 14.5 (54 aa).

The signal sequence occupies residues 1 to 23 (MKIFFAILLILAVCSMAIWTVNG). Cystine bridges form between C30–C46, C36–C51, and C40–C53.

This sequence belongs to the short scorpion toxin superfamily. Potassium channel inhibitor family. Alpha-KTx 14 subfamily. In terms of tissue distribution, expressed by the venom gland.

It localises to the secreted. Functionally, inhibits potassium channels. May be active towards small conductance calcium-activated potassium channels (KCNN, SK), and less active towards voltage-gated potassium channels (Kv/KCN). The protein is Potassium channel toxin alpha-KTx 14.5 of Mesobuthus gibbosus (Mediterranean checkered scorpion).